The primary structure comprises 429 residues: Ribosomal RNA small subunit methyltransferase B (429 aa).

Residues 254–260 (CAAPGGK), Asp277, Asp303, and Asp322 each bind S-adenosyl-L-methionine. Residue Cys375 is the Nucleophile of the active site.

This sequence belongs to the class I-like SAM-binding methyltransferase superfamily. RsmB/NOP family.

The protein localises to the cytoplasm. The catalysed reaction is cytidine(967) in 16S rRNA + S-adenosyl-L-methionine = 5-methylcytidine(967) in 16S rRNA + S-adenosyl-L-homocysteine + H(+). Functionally, specifically methylates the cytosine at position 967 (m5C967) of 16S rRNA. This chain is Ribosomal RNA small subunit methyltransferase B, found in Pectobacterium carotovorum subsp. carotovorum (strain PC1).